A 530-amino-acid chain; its full sequence is Na(+)/H(+) antiporter NhaB (530 aa).

12 helical membrane-spanning segments follow: residues 13-33 (FLGKAPDWYKLAIISFLIINP), 98-118 (LLLVFMVAGIYFMKELLLFIF), 123-145 (LGIQSKILLSVAFCVAAAFLSAF), 149-166 (LTVIAVVISVAVGFYSIY), 205-225 (LLMHAGVGTALGGVMTMVGEP), 238-258 (FGEFIIRMLPVTLPVFFCGIL), 308-328 (IAVWLIVGLALHVAEVGLIGL), 330-350 (VIILATAFTGVIEEHSMGKAF), 356-376 (FTALLAVFFAVVAVIIDQALF), 393-413 (LALFYVANGILSMVSDNVFVG), 451-471 (ATPNGQAAFLFLLTSALAPLI), and 480-500 (IMALPYTIVLALVGLAGIVFF).

The protein belongs to the NhaB Na(+)/H(+) (TC 2.A.34) antiporter family.

It is found in the cell inner membrane. It carries out the reaction 2 Na(+)(in) + 3 H(+)(out) = 2 Na(+)(out) + 3 H(+)(in). Its function is as follows. Na(+)/H(+) antiporter that extrudes sodium in exchange for external protons. This chain is Na(+)/H(+) antiporter NhaB, found in Vibrio atlanticus (strain LGP32) (Vibrio splendidus (strain Mel32)).